Here is a 167-residue protein sequence, read N- to C-terminus: Putative N-acetylgalactosamine-6-phosphate deacetylase (167 aa).

This sequence belongs to the metallo-dependent hydrolases superfamily. NagA family.

The catalysed reaction is N-acetyl-D-galactosamine 6-phosphate + H2O = D-galactosamine 6-phosphate + acetate. In Escherichia coli (strain K12), this protein is Putative N-acetylgalactosamine-6-phosphate deacetylase (agaA).